Here is a 307-residue protein sequence, read N- to C-terminus: Furaquinocin biosynthesis prenyltransferase (307 aa).

It belongs to the aromatic prenyltransferase family. As to quaternary structure, monomer.

It catalyses the reaction 2-O,3-dimethylflaviolin + (2E)-geranyl diphosphate = 6-linalyl-2-O,3-dimethylflaviolin + diphosphate. The catalysed reaction is 2-O,3-dimethylflaviolin + (2E)-geranyl diphosphate + H(+) = 7-O-geranyl-2-O,3-dimethylflaviolin + diphosphate. With respect to regulation, does not require any metal cations for activity. Functionally, involved in the biosynthesis of furaquinocin. Catalyzes the transfer of a geranyl group to 2-methoxy-3-methyl-flaviolin to yield 6-prenyl-2-methoxy-3-methyl-flaviolin and 7-O-geranyl-2-methoxy-3-methyl-flaviolin in a 10:1 ratio. Can also use other substrates such as flaviolin or 1,3-dihydroxy naphthalene, and can also use DMAPP as prenyl donor. The protein is Furaquinocin biosynthesis prenyltransferase of Streptomyces sp. (strain KO-3988).